A 471-amino-acid polypeptide reads, in one-letter code: Mixed lineage kinase domain-like protein (471 aa).

Residues M1–Q149 are N-terminal bundle and brace (NBB); mediates INSP6 binding. A coiled-coil region spans residues S55 to N84. At S125 the chain carries Phosphoserine. The stretch at Q139–L180 forms a coiled coil. In terms of domain architecture, Protein kinase spans K194–F469. ATP-binding positions include L209–L217 and K230. T357 bears the Phosphothreonine; by RIPK3 mark. Phosphoserine; by RIPK3 occurs at positions 358 and 360.

It belongs to the protein kinase superfamily. Homooligomer. Homotrimer; forms homotrimers on necroptosis induction. Upon TNF-induced necrosis, forms in complex with PGAM5, RIPK1 and RIPK3. Within this complex, may play a role in the proper targeting of RIPK1-RIPK3 to its downstream effector PGAM5. Interacts with RIPK3; the interaction is direct and promotes its phosphorylation and subsequent activation. Phosphorylation by RIPK3 induces a conformational switch that is required for necroptosis. It also induces homotrimerization and localization to the plasma membrane.

Its subcellular location is the cytoplasm. The protein localises to the cell membrane. It is found in the nucleus. Its activity is regulated as follows. Activated via binding to highly phosphorylated inositol phosphates such as inositolhexakisphosphate (InsP6) which mediates the release of an N-terminal auto-inhibitory region. Activation requires not only RIPK3-dependent phosphorylation but also binding to highly phosphorylated inositol phosphates. Inhibited by necrosulfonamide, a specific inhibitor of necroptosis that targets Cys-86. In terms of biological role, pseudokinase that plays a key role in TNF-induced necroptosis, a programmed cell death process. Does not have protein kinase activity. Activated following phosphorylation by RIPK3, leading to homotrimerization, localization to the plasma membrane and execution of programmed necrosis characterized by calcium influx and plasma membrane damage. In addition to TNF-induced necroptosis, necroptosis can also take place in the nucleus in response to orthomyxoviruses infection: following activation by ZBP1, MLKL is phosphorylated by RIPK3 in the nucleus, triggering disruption of the nuclear envelope and leakage of cellular DNA into the cytosol.following ZBP1 activation, which senses double-stranded Z-RNA structures, nuclear RIPK3 catalyzes phosphorylation and activation of MLKL, promoting disruption of the nuclear envelope and leakage of cellular DNA into the cytosol. Binds to highly phosphorylated inositol phosphates such as inositolhexakisphosphate (InsP6) which is essential for its necroptotic function. This chain is Mixed lineage kinase domain-like protein, found in Homo sapiens (Human).